Reading from the N-terminus, the 594-residue chain is Zinc finger protein 467 (594 aa).

The tract at residues 1–86 (MRETLEALNS…PQKAEPAGSV (86 aa)) is disordered. Residues 1–183 (MRETLEALNS…TLRLHQRLHR (183 aa)) form an interaction with STAT3 region. Residues 31–47 (SNAQEKMSSRGESTLHS) are compositionally biased toward polar residues. Basic and acidic residues predominate over residues 54–64 (PGQKEGIHTEQ). A Glycyl lysine isopeptide (Lys-Gly) (interchain with G-Cter in SUMO2) cross-link involves residue Lys-97. C2H2-type zinc fingers lie at residues 160-182 (YGCEECERRFRDQLTLRLHQRLH), 188-210 (CACPDCGRSFTQRAHMLLHQRSH), 216-238 (FPCSECDKRFSKKAHLTRHLRTH), 244-266 (YPCAECGKRFSQKIHLGSHQKTH), 272-294 (FPCTECEKRFRKKTHLIRHQRIH), 300-322 (YQCTQCTRSFTHKQHLVRHQRVH), 355-377 (FACSHCGQSFGWKKNLATHQSLH), 430-452 (FFCPDCGRGFAHGQHLARHRRVH), 458-480 (FACAQCGRRFGSRPNLVAHSRAH), 486-508 (FACAQCGRRFSRKSHLGRHQAVH), 514-536 (HACAVCARCFSSKTNLVRHQAIH), and 542-564 (FSCPQCAKSFSRKTHLVRHQRIH). Residues 313 to 351 (QHLVRHQRVHDAASRTRSSPDIPVAPHSPTASLTPSPPG) are disordered. A Glycyl lysine isopeptide (Lys-Gly) (interchain with G-Cter in SUMO2) cross-link involves residue Lys-368.

The protein belongs to the krueppel C2H2-type zinc-finger protein family. As to quaternary structure, interacts with STAT3. Enhances STAT3 activity by keeping it in the nucleus.

It localises to the nucleus. Functionally, transcription factor that promotes adipocyte differentiation and suppresses osteoblast differentiation in the bone marrow. Enhances the osteoclast-supporting ability of stromal cells. Binds with STAT3 the consensus sequence 5'-CTTCTGGGAAGA-3' of the acute phase response element (APRE). Transactivates several promoters including FOS, OSM and PPARG. Recruits a histone deacetylase complex. The polypeptide is Zinc finger protein 467 (Znf467) (Mus musculus (Mouse)).